The sequence spans 449 residues: XK-related protein 2 (449 aa).

A run of 10 helical transmembrane segments spans residues 35 to 55 (FSIL…LYMV), 68 to 88 (TYTF…LIFV), 98 to 118 (LSLF…EAMI), 174 to 194 (IQAF…SLIS), 204 to 224 (LMAF…MLAI), 241 to 261 (LCIT…LVLF), 269 to 289 (AVPF…VKFW), 306 to 326 (VGTL…NFSC), 357 to 377 (LVEN…VLLN), and 382 to 402 (LIAV…LLFF).

Belongs to the XK family.

The protein localises to the membrane. The polypeptide is XK-related protein 2 (Xkrx) (Mus musculus (Mouse)).